The primary structure comprises 557 residues: T-complex protein 1 subunit theta-like 2 (557 aa).

2 disordered regions span residues 1 to 33 and 531 to 557; these read MDSTVPSALELPQRLALNPRESPRSPEEEEPHL and EIWNPDSKKTKKHPPPVETKKILGLNN.

It belongs to the TCP-1 chaperonin family.

The protein resides in the cytoplasm. Its function is as follows. Possible molecular chaperone; assists the folding of proteins upon ATP hydrolysis. The sequence is that of T-complex protein 1 subunit theta-like 2 (CCT8L2) from Homo sapiens (Human).